The following is a 501-amino-acid chain: Vitamin D 25-hydroxylase (501 aa).

The signal sequence occupies residues 1–26 (MWKLWRAEEGAAALGGALFLLLFALG). Residue alanine 250 participates in substrate binding. Cysteine 448 lines the heme pocket.

It belongs to the cytochrome P450 family. In terms of assembly, homodimer. It depends on heme as a cofactor.

Its subcellular location is the endoplasmic reticulum membrane. It is found in the microsome membrane. It carries out the reaction calciol + reduced [NADPH--hemoprotein reductase] + O2 = calcidiol + oxidized [NADPH--hemoprotein reductase] + H2O + H(+). The enzyme catalyses vitamin D2 + reduced [NADPH--hemoprotein reductase] + O2 = 25-hydroxyvitamin D2 + oxidized [NADPH--hemoprotein reductase] + H2O + H(+). The catalysed reaction is 1alpha-hydroxyvitamin D2 + reduced [NADPH--hemoprotein reductase] + O2 = 1alpha,25-dihydroxyvitamin D2 + oxidized [NADPH--hemoprotein reductase] + H2O + H(+). It catalyses the reaction alfacalcidol + reduced [NADPH--hemoprotein reductase] + O2 = calcitriol + oxidized [NADPH--hemoprotein reductase] + H2O + H(+). Its pathway is hormone biosynthesis; vitamin D biosynthesis. In terms of biological role, a cytochrome P450 monooxygenase involved in activation of vitamin D precursors. Catalyzes hydroxylation at C-25 of both forms of vitamin D, vitamin D(2) and D(3) (calciol). Can metabolize vitamin D analogs/prodrugs 1alpha-hydroxyvitamin D(2) (doxercalciferol) and 1alpha-hydroxyvitamin D(3) (alfacalcidol) forming 25-hydroxy derivatives. Mechanistically, uses molecular oxygen inserting one oxygen atom into a substrate, and reducing the second into a water molecule, with two electrons provided by NADPH via cytochrome P450 reductase (CPR; NADPH-ferrihemoprotein reductase). This Homo sapiens (Human) protein is Vitamin D 25-hydroxylase (CYP2R1).